Consider the following 329-residue polypeptide: MSTASAFAINAPSFVNASSLKKSSSSARSGVLSARFTCNSSSSSSSATPPSLIRNEPVFAAPAPIITPNWTEDGNESYEEAIDALKKMLIEKGELEPVAAARIDQITAQAAAPDTKAPFDPVERIKSGFVKFKTEKFVTNPVLYDELAKGQSPKFMVFACSDSRVCPSHVLDFQPGEAFVVRNVANMVPPFDKTKYSGVGAAVEYAVLHLKVQEIFVIGHSRCGGIKGLMTFPDEGPHSTDFIEDWVKVCLPAKSKVVAEHNGTHLDDQCVLCEKEAVNVSLGNLLTYPFVRDGLRNNTLALKGGHYDFVNGTFELWALDFGLSSPTSV.

The interval 1–108 (MSTASAFAIN…AAARIDQITA (108 aa)) is chloroplast transit peptide-like.

It belongs to the beta-class carbonic anhydrase family. As to quaternary structure, homohexamer.

It localises to the cytoplasm. The enzyme catalyses hydrogencarbonate + H(+) = CO2 + H2O. In terms of biological role, reversible hydration of carbon dioxide. This Flaveria pringlei protein is Carbonic anhydrase.